The primary structure comprises 450 residues: Bifunctional protein GlmU (450 aa).

Residues 1–229 (MRRHAIILAA…VEEIMGVNDR (229 aa)) form a pyrophosphorylase region. UDP-N-acetyl-alpha-D-glucosamine is bound by residues 8-11 (LAAG), lysine 22, glutamine 72, and 77-78 (GT). Mg(2+) is bound at residue aspartate 102. Glycine 139, glutamate 154, and asparagine 227 together coordinate UDP-N-acetyl-alpha-D-glucosamine. Asparagine 227 serves as a coordination point for Mg(2+). The linker stretch occupies residues 230-250 (VMLSQAEKAMQRRTNHYHMLN). Residues 251-450 (GVTIIDPDST…RQTTKEGYRK (200 aa)) form an N-acetyltransferase region. UDP-N-acetyl-alpha-D-glucosamine-binding residues include arginine 332 and lysine 350. The active-site Proton acceptor is the histidine 362. Residues tyrosine 365 and asparagine 376 each contribute to the UDP-N-acetyl-alpha-D-glucosamine site. Residues 385–386 (NY), alanine 422, and arginine 439 each bind acetyl-CoA.

This sequence in the N-terminal section; belongs to the N-acetylglucosamine-1-phosphate uridyltransferase family. In the C-terminal section; belongs to the transferase hexapeptide repeat family. In terms of assembly, homotrimer. The cofactor is Mg(2+).

The protein resides in the cytoplasm. The catalysed reaction is alpha-D-glucosamine 1-phosphate + acetyl-CoA = N-acetyl-alpha-D-glucosamine 1-phosphate + CoA + H(+). It catalyses the reaction N-acetyl-alpha-D-glucosamine 1-phosphate + UTP + H(+) = UDP-N-acetyl-alpha-D-glucosamine + diphosphate. It participates in nucleotide-sugar biosynthesis; UDP-N-acetyl-alpha-D-glucosamine biosynthesis; N-acetyl-alpha-D-glucosamine 1-phosphate from alpha-D-glucosamine 6-phosphate (route II): step 2/2. It functions in the pathway nucleotide-sugar biosynthesis; UDP-N-acetyl-alpha-D-glucosamine biosynthesis; UDP-N-acetyl-alpha-D-glucosamine from N-acetyl-alpha-D-glucosamine 1-phosphate: step 1/1. Its pathway is bacterial outer membrane biogenesis; LPS lipid A biosynthesis. Its function is as follows. Catalyzes the last two sequential reactions in the de novo biosynthetic pathway for UDP-N-acetylglucosamine (UDP-GlcNAc). The C-terminal domain catalyzes the transfer of acetyl group from acetyl coenzyme A to glucosamine-1-phosphate (GlcN-1-P) to produce N-acetylglucosamine-1-phosphate (GlcNAc-1-P), which is converted into UDP-GlcNAc by the transfer of uridine 5-monophosphate (from uridine 5-triphosphate), a reaction catalyzed by the N-terminal domain. This Staphylococcus aureus (strain USA300) protein is Bifunctional protein GlmU.